We begin with the raw amino-acid sequence, 183 residues long: ATP-dependent protease subunit HslV (183 aa).

Threonine 13 is an active-site residue. Residues glycine 168, cysteine 171, and threonine 174 each coordinate Na(+).

Belongs to the peptidase T1B family. HslV subfamily. In terms of assembly, a double ring-shaped homohexamer of HslV is capped on each side by a ring-shaped HslU homohexamer. The assembly of the HslU/HslV complex is dependent on binding of ATP.

Its subcellular location is the cytoplasm. It carries out the reaction ATP-dependent cleavage of peptide bonds with broad specificity.. Its activity is regulated as follows. Allosterically activated by HslU binding. Protease subunit of a proteasome-like degradation complex believed to be a general protein degrading machinery. The chain is ATP-dependent protease subunit HslV from Xanthomonas oryzae pv. oryzae (strain MAFF 311018).